Consider the following 1082-residue polypeptide: Probable arabinosyltransferase B (1082 aa).

The next 13 membrane-spanning stretches (helical) occupy residues 28–50 (WVAT…LPVT), 223–241 (LAAM…LALW), 262–281 (VTAV…VIGA), 333–352 (SIWI…LLLS), 359–381 (LGPA…LGAW), 420–442 (AITT…AALL), 462–481 (WPLI…VVFA), 522–544 (AISR…FMML), 557–574 (AWRL…LMFT), 578–600 (WTHH…TVLV), 613–635 (AFLS…WWYV), 650–672 (GGVQ…AFWL), and 689–711 (APIP…IGVV).

It belongs to the emb family.

It is found in the cell membrane. Arabinosyl transferase responsible for the polymerization of arabinose into the arabinan of arabinogalactan. This Mycolicibacterium smegmatis (Mycobacterium smegmatis) protein is Probable arabinosyltransferase B (embB).